We begin with the raw amino-acid sequence, 289 residues long: LBH domain-containing protein 1 (289 aa).

Disordered stretches follow at residues 1–36 and 205–289; these read MALV…PLWD and EGAE…ASQD. In terms of domain architecture, LBH spans 1–128; sequence MALVPGRSKE…AEAFFQDQSE (128 aa). The span at 15–25 shows a compositional bias: polar residues; that stretch reads TRNSPGSSQHP.

As to expression, expressed in bladder cancer tissues (at protein level).

The chain is LBH domain-containing protein 1 from Homo sapiens (Human).